The sequence spans 236 residues: UPF0502 protein Bamb_4889 (236 aa).

This sequence belongs to the UPF0502 family.

The sequence is that of UPF0502 protein Bamb_4889 from Burkholderia ambifaria (strain ATCC BAA-244 / DSM 16087 / CCUG 44356 / LMG 19182 / AMMD) (Burkholderia cepacia (strain AMMD)).